The following is a 288-amino-acid chain: ATP synthase gamma chain (288 aa).

It belongs to the ATPase gamma chain family. In terms of assembly, F-type ATPases have 2 components, CF(1) - the catalytic core - and CF(0) - the membrane proton channel. CF(1) has five subunits: alpha(3), beta(3), gamma(1), delta(1), epsilon(1). CF(0) has three main subunits: a, b and c.

Its subcellular location is the cell inner membrane. In terms of biological role, produces ATP from ADP in the presence of a proton gradient across the membrane. The gamma chain is believed to be important in regulating ATPase activity and the flow of protons through the CF(0) complex. The protein is ATP synthase gamma chain of Rickettsia felis (strain ATCC VR-1525 / URRWXCal2) (Rickettsia azadi).